A 422-amino-acid polypeptide reads, in one-letter code: MALPWVEKYRPKSFADVVDQEEAKYVLASWICARFRAPKDFCTRWAKKKDKEILDARAVLLAGPPGVGKTTLIHALAREIGYELIELNASDVRTAERLKEVVGRGLREGSLFGYGGKIVLFDEVDGLHVKEDAGGLEAIIEIIENSKVPIVMTANNPYDPRFRPLRDISLVVNLKRLSEEEVVEVLRRICTSEGAKCEEEALRSIAKSSLGDLRAAINDLQMYLSGGRKTLTVDDIKRVGERNPQLSMFEILDRVYRARWFDEARAISFNPSFDWEQYFIWATETIPVVYKEIETMSVAYDRLSKADMFIGRIKRTQEWELLPYALELALGGVSQIKSKPRLPPFIKYGFPQRLLILAKSREARKRRDVLVEYLAQNLHVSRSYVKSEIIYVLGVLAKSDSKIVERLSKALGINAIDIKTLL.

63–70 (GPPGVGKT) is an ATP binding site.

The protein belongs to the activator 1 small subunits family. RfcL subfamily. In terms of assembly, heteromultimer composed of small subunits (RfcS) and large subunits (RfcL).

Functionally, part of the RFC clamp loader complex which loads the PCNA sliding clamp onto DNA. The polypeptide is Replication factor C large subunit (Pyrobaculum arsenaticum (strain DSM 13514 / JCM 11321 / PZ6)).